The chain runs to 327 residues: Fructose-1,6-bisphosphatase class 1 (327 aa).

Glu84, Asp103, Leu105, and Asp106 together coordinate Mg(2+). Residues 106-109 (DGSS), Asn198, and Lys264 contribute to the substrate site. Residue Glu270 coordinates Mg(2+).

The protein belongs to the FBPase class 1 family. As to quaternary structure, homotetramer. Requires Mg(2+) as cofactor.

It localises to the cytoplasm. It catalyses the reaction beta-D-fructose 1,6-bisphosphate + H2O = beta-D-fructose 6-phosphate + phosphate. It participates in carbohydrate biosynthesis; gluconeogenesis. The polypeptide is Fructose-1,6-bisphosphatase class 1 (Psychrobacter cryohalolentis (strain ATCC BAA-1226 / DSM 17306 / VKM B-2378 / K5)).